The chain runs to 269 residues: MSRFDTLFANLKAKNEGAFVPFVTLCDPDFDRSFEIIETLIANGADALELGFPFSDPLLDGSVIQAANKRALDGGYSTDACFEMIAKIRSKYPEIPIGLLLCANLVFVPTQDVFFKRCAETGVDAVLIADVPVLAAEEFTQAAKKHGIQSVFICPPNADQATIERIARLTEGYTYLVSRAGVTSAENQAHAKNLDNLIESLKRSNSAPILQGFGIAKPEQVKEALALGCDGAISGSAIVKIIERNLDSQTQLLSELAKFVSVMKTATKS.

Catalysis depends on proton acceptor residues E49 and D60.

Belongs to the TrpA family. In terms of assembly, tetramer of two alpha and two beta chains.

It catalyses the reaction (1S,2R)-1-C-(indol-3-yl)glycerol 3-phosphate + L-serine = D-glyceraldehyde 3-phosphate + L-tryptophan + H2O. It participates in amino-acid biosynthesis; L-tryptophan biosynthesis; L-tryptophan from chorismate: step 5/5. In terms of biological role, the alpha subunit is responsible for the aldol cleavage of indoleglycerol phosphate to indole and glyceraldehyde 3-phosphate. The polypeptide is Tryptophan synthase alpha chain (Actinobacillus pleuropneumoniae serotype 3 (strain JL03)).